A 969-amino-acid polypeptide reads, in one-letter code: Surface protein P113 (969 aa).

The first 22 residues, 1–22, serve as a signal peptide directing secretion; sequence MKIPFFILHILLLQFLLCLIRC. Asn-207 is a glycosylation site (N-linked (GlcNAc...) asparagine). The segment at 223 to 328 is disordered; sequence IGDESTDSSS…TDTLVNNKEN (106 aa). The span at 229 to 241 shows a compositional bias: polar residues; sequence DSSSMEIQDSTSN. The N-linked (GlcNAc...) asparagine glycan is linked to Asn-268. The span at 300-311 shows a compositional bias: basic and acidic residues; that stretch reads KNEDNKDLEHGS. Positions 312-325 are enriched in low complexity; that stretch reads SNDVNNNTDTLVNN. Residues Asn-317, Asn-360, Asn-661, and Asn-697 are each glycosylated (N-linked (GlcNAc...) asparagine). Positions 688–705 are enriched in polar residues; it reads SSNFNIFDSNNTDQNNEQ. Positions 688 to 947 are disordered; that stretch reads SSNFNIFDSN…NETNKTDNGS (260 aa). The span at 713-727 shows a compositional bias: low complexity; sequence QLLNNNNDDVLSESN. Residues 728 to 749 show a composition bias toward basic and acidic residues; that stretch reads NENKEKTSDDATHKETQEKSDQ. Asn-779 is a glycosylation site (N-linked (GlcNAc...) asparagine). A compositionally biased stretch (acidic residues) spans 798 to 811; that stretch reads EGTEELQQNDEDAE. Basic and acidic residues predominate over residues 812 to 822; that stretch reads SLTKENSKSEE. The segment covering 823–841 has biased composition (acidic residues); the sequence is QENEDSTDAEAIDKEEVET. The span at 842–854 shows a compositional bias: basic and acidic residues; sequence EEKGKDEQKKDEQ. The span at 855 to 864 shows a compositional bias: acidic residues; sequence KEQDEEEDGE. Asn-876 carries N-linked (GlcNAc...) asparagine glycosylation. The span at 883–896 shows a compositional bias: basic and acidic residues; it reads EENKNEVKGEEHLQ. The segment covering 897-907 has biased composition (low complexity); it reads GSEQSIEASES. Residues 908-917 are compositionally biased toward basic and acidic residues; sequence SQKDETKETE. Positions 918 to 936 are enriched in acidic residues; it reads DKEEYVNANDDESSEEDTT. Residues 937–947 are compositionally biased toward polar residues; sequence PNETNKTDNGS. Asn-938, Asn-941, and Asn-945 each carry an N-linked (GlcNAc...) asparagine glycan. The GPI-anchor amidated asparagine moiety is linked to residue Asn-945. Residues 946-969 constitute a propeptide, removed in mature form; the sequence is GSSFFFAMSNALLVILLLLFIEFL.

As to quaternary structure, forms a complex composed of RH5, P113 and human BSG/basigin; the complex bridges the merozoite and host erythrocyte membranes. Within the complex, interacts with RH5 (via N-terminus); the interaction tethers RH5 to the merozoite membrane.

The protein resides in the cell membrane. Its function is as follows. Membrane receptor which tethers secreted RH5 to the merozoite membrane during merozoite invasion of host erythocytes. The sequence is that of Surface protein P113 from Plasmodium falciparum (isolate 3D7).